A 420-amino-acid chain; its full sequence is E3 ubiquitin-protein ligase pellino homolog 2 (420 aa).

The FHA; atypical domain maps to 15-202 (EPVKYGELVV…MHPRGGFTEE (188 aa)).

The protein belongs to the pellino family. As to quaternary structure, interacts with TRAF6, IRAK1, IRAK4 and MAP3K7. Interacts with BCL10; this interaction is impaired by SOCS3. In terms of processing, phosphorylated by IRAK1 and IRAK4 enhancing its E3 ligase activity.

The enzyme catalyses S-ubiquitinyl-[E2 ubiquitin-conjugating enzyme]-L-cysteine + [acceptor protein]-L-lysine = [E2 ubiquitin-conjugating enzyme]-L-cysteine + N(6)-ubiquitinyl-[acceptor protein]-L-lysine.. It functions in the pathway protein modification; protein ubiquitination. Its function is as follows. E3 ubiquitin ligase catalyzing the covalent attachment of ubiquitin moieties onto substrate proteins. Involved in the TLR and IL-1 signaling pathways via interaction with the complex containing IRAK kinases and TRAF6. Mediates IL1B-induced IRAK1 'Lys-63'-linked polyubiquitination and possibly 'Lys-48'-linked ubiquitination. May be important for LPS- and IL1B-induced MAP3K7-dependent, but not MAP3K3-dependent, NF-kappa-B activation. Can activate the MAP (mitogen activated protein) kinase pathway leading to activation of ELK1. The chain is E3 ubiquitin-protein ligase pellino homolog 2 (PELI2) from Homo sapiens (Human).